Here is a 308-residue protein sequence, read N- to C-terminus: Serine/threonine-protein phosphatase PP1 (308 aa).

4 residues coordinate Mn(2+): aspartate 64, histidine 66, aspartate 92, and asparagine 124. The active-site Proton donor is the histidine 125. Mn(2+)-binding residues include histidine 173 and histidine 248.

The protein belongs to the PPP phosphatase family. PP-1 subfamily. It depends on Mn(2+) as a cofactor.

The protein resides in the cytoplasm. The catalysed reaction is O-phospho-L-seryl-[protein] + H2O = L-seryl-[protein] + phosphate. It catalyses the reaction O-phospho-L-threonyl-[protein] + H2O = L-threonyl-[protein] + phosphate. The sequence is that of Serine/threonine-protein phosphatase PP1 (pph-3) from Neurospora crassa (strain ATCC 24698 / 74-OR23-1A / CBS 708.71 / DSM 1257 / FGSC 987).